The sequence spans 228 residues: 2-C-methyl-D-erythritol 4-phosphate cytidylyltransferase (228 aa).

It belongs to the IspD/TarI cytidylyltransferase family. IspD subfamily.

The catalysed reaction is 2-C-methyl-D-erythritol 4-phosphate + CTP + H(+) = 4-CDP-2-C-methyl-D-erythritol + diphosphate. It functions in the pathway isoprenoid biosynthesis; isopentenyl diphosphate biosynthesis via DXP pathway; isopentenyl diphosphate from 1-deoxy-D-xylulose 5-phosphate: step 2/6. In terms of biological role, catalyzes the formation of 4-diphosphocytidyl-2-C-methyl-D-erythritol from CTP and 2-C-methyl-D-erythritol 4-phosphate (MEP). The protein is 2-C-methyl-D-erythritol 4-phosphate cytidylyltransferase of Nostoc sp. (strain PCC 7120 / SAG 25.82 / UTEX 2576).